A 39-amino-acid polypeptide reads, in one-letter code: Photosystem II reaction center protein J (39 aa).

Residues 7-27 (IPLWLVATVAGMGVITLLGIF) form a helical membrane-spanning segment.

This sequence belongs to the PsbJ family. In terms of assembly, PSII is composed of 1 copy each of membrane proteins PsbA, PsbB, PsbC, PsbD, PsbE, PsbF, PsbH, PsbI, PsbJ, PsbK, PsbL, PsbM, PsbT, PsbX, PsbY, PsbZ, Psb30/Ycf12, peripheral proteins PsbO, CyanoQ (PsbQ), PsbU, PsbV and a large number of cofactors. It forms dimeric complexes.

It localises to the cellular thylakoid membrane. Functionally, one of the components of the core complex of photosystem II (PSII). PSII is a light-driven water:plastoquinone oxidoreductase that uses light energy to abstract electrons from H(2)O, generating O(2) and a proton gradient subsequently used for ATP formation. It consists of a core antenna complex that captures photons, and an electron transfer chain that converts photonic excitation into a charge separation. In Cyanothece sp. (strain PCC 7425 / ATCC 29141), this protein is Photosystem II reaction center protein J.